Consider the following 219-residue polypeptide: Virginiamycin A acetyltransferase (219 aa).

Residue histidine 87 is part of the active site.

The protein belongs to the transferase hexapeptide repeat family.

Inactivates the A compounds of virginiamycin-like antibiotics, thus providing resistance to these antibiotics. This Staphylococcus aureus protein is Virginiamycin A acetyltransferase (vat).